Consider the following 383-residue polypeptide: TnpB-like protein ORF383B (383 aa).

C328, C331, C345, and C348 together coordinate Zn(2+).

This sequence in the N-terminal section; belongs to the transposase 2 family. The protein in the C-terminal section; belongs to the transposase 35 family.

The sequence is that of TnpB-like protein ORF383B from Acidianus convivator (ATV).